Here is a 937-residue protein sequence, read N- to C-terminus: Vacuolar membrane protease (937 aa).

Residues 1–16 lie on the Cytoplasmic side of the membrane; sequence PNGFVKFIRSIFGYRK. A helical transmembrane segment spans residues 17-37; it reads TSLTLFVILTYVAVLLLAYLD. The Vacuolar portion of the chain corresponds to 38 to 373; sequence HSLYYSVDLP…FPTSQVVVAS (336 aa). N-linked (GlcNAc...) asparagine glycosylation is found at asparagine 106 and asparagine 140. Histidine 154 and aspartate 166 together coordinate Zn(2+). Glutamate 201 acts as the Proton acceptor in catalysis. 3 residues coordinate Zn(2+): glutamate 202, glutamate 227, and histidine 300. Residues 374–394 form a helical membrane-spanning segment; that stretch reads ILLLVLIPGISIPFLIIIFGY. Residues 395–407 lie on the Cytoplasmic side of the membrane; the sequence is KKNWELSFVNVTK. Residues 408–428 form a helical membrane-spanning segment; sequence FPISLAISAALLNLFTNGFIV. Over 429 to 437 the chain is Vacuolar; that stretch reads PFNQFLPNS. Residues 438–458 traverse the membrane as a helical segment; sequence SPFALVAILFATFLLLNYLIL. Topologically, residues 459 to 475 are cytoplasmic; the sequence is NGINLIFVSYKIVNHDE. A helical membrane pass occupies residues 476-496; it reads KLISIIETSFLYWVVLIYSTA. At 497–510 the chain is on the vacuolar side; the sequence is KLANNVIGDDHSGE. The chain crosses the membrane as a helical span at residues 511–531; sequence FPIIFLCALQAVASIFGLIGW. At 532–580 the chain is on the cytoplasmic side; it reads SFKPVPKEHYVVVPQEEAEPLLGSSDNFNYGSPDVEDDRLVSDGSYDWS. A helical transmembrane segment spans residues 581-601; sequence IQFLTIVPISTYLIYNSGFLV. The Vacuolar portion of the chain corresponds to 602–618; it reads VDGINKSIQESLISQNL. An N-linked (GlcNAc...) asparagine glycan is attached at asparagine 606. Residues 619–639 form a helical membrane-spanning segment; that stretch reads IYKLLQTFAISLSIPLLPFIF. The Cytoplasmic portion of the chain corresponds to 640–643; the sequence is KVNR. Residues 644-664 traverse the membrane as a helical segment; it reads LFVLALFLISTIGVLFVATAD. At 665-937 the chain is on the vacuolar side; the sequence is SFNVANPLKL…LVSVSKTVEL (273 aa). 3 N-linked (GlcNAc...) asparagine glycosylation sites follow: asparagine 758, asparagine 870, and asparagine 887.

This sequence belongs to the peptidase M28 family. It depends on Zn(2+) as a cofactor.

The protein resides in the vacuole membrane. In terms of biological role, may be involved in vacuolar sorting and osmoregulation. In Scheffersomyces stipitis (strain ATCC 58785 / CBS 6054 / NBRC 10063 / NRRL Y-11545) (Yeast), this protein is Vacuolar membrane protease.